The primary structure comprises 375 residues: PqqA peptide cyclase (375 aa).

The Radical SAM core domain maps to 18-235 (ILPPMAMLAE…EAREKYQGIL (218 aa)). 3 residues coordinate [4Fe-4S] cluster: Cys32, Cys36, and Cys39.

Belongs to the radical SAM superfamily. PqqE family. Interacts with PqqD. The interaction is necessary for activity of PqqE. Requires [4Fe-4S] cluster as cofactor.

It carries out the reaction [PQQ precursor protein] + S-adenosyl-L-methionine = E-Y cross-linked-[PQQ precursor protein] + 5'-deoxyadenosine + L-methionine + H(+). It functions in the pathway cofactor biosynthesis; pyrroloquinoline quinone biosynthesis. Its function is as follows. Catalyzes the cross-linking of a glutamate residue and a tyrosine residue in the PqqA protein as part of the biosynthesis of pyrroloquinoline quinone (PQQ). This chain is PqqA peptide cyclase, found in Rhizobium meliloti (strain 1021) (Ensifer meliloti).